Here is a 438-residue protein sequence, read N- to C-terminus: Telomeric repeat-binding factor 1 (438 aa).

Residues Met1–Pro10 show a composition bias toward polar residues. The tract at residues Met1–Gln36 is disordered. Ala2 carries the post-translational modification N-acetylalanine. Phosphoserine is present on Ser11. The tract at residues Glu58–Arg268 is TRFH dimerization. Residue Lys213 forms a Glycyl lysine isopeptide (Lys-Gly) (interchain with G-Cter in SUMO2) linkage. At Ser219 the chain carries Phosphoserine; by ATM. The interaction with RLIM stretch occupies residues Glu265–Arg378. The interval Arg268–Thr311 is disordered. The span at Asp299–Thr311 shows a compositional bias: polar residues. Lys325 is covalently cross-linked (Glycyl lysine isopeptide (Lys-Gly) (interchain with G-Cter in SUMO2)). Residues Leu326–His375 form a disordered region. The Nuclear localization signal motif lies at Lys337–Arg356. Lys366 participates in a covalent cross-link: Glycyl lysine isopeptide (Lys-Gly) (interchain with G-Cter in SUMO2). An HTH myb-type domain is found at His375–Leu432. A DNA-binding region (H-T-H motif) is located at residues Trp403 to Lys428.

In terms of assembly, homodimer; can contain both isoforms. Found in a complex with POT1; TINF2 and TNKS1. Interacts with ATM, TINF2, TNKS1, TNKS2, PINX1, NEK2 and MAPRE1. Component of the shelterin complex (telosome) composed of TERF1, TERF2, TINF2, TERF2IP ACD and POT1. Interacts with RLIM (via N-terminus). Interacts with FBXO4. Interaction with TINF2 protects against interaction with FBXO4 and subsequent polyubiquitination and proteasomal degradation. Interacts with GNL3L; this interaction promotes homodimerization. Interacts with TIN2. Interactions with GNL3L and TIN2 are mutually exclusive. Interacts with RTEL1. Interacts with CCDC79/TERB1. Phosphorylated preferentially on Ser-219 in an ATM-dependent manner in response to ionizing DNA damage. Post-translationally, ADP-ribosylation by TNKS1 or TNKS2 diminishes its ability to bind to telomeric DNA. In terms of processing, ubiquitinated by RLIM/RNF12, leading to its degradation by the proteasome. Ubiquitinated by a SCF (SKP1-CUL1-F-box protein) ubiquitin-protein ligase complex, leading to its degradation by the proteasome.

It is found in the nucleus. Its subcellular location is the chromosome. The protein localises to the telomere. It localises to the cytoplasm. The protein resides in the cytoskeleton. It is found in the spindle. Its function is as follows. Binds the telomeric double-stranded 5'-TTAGGG-3' repeat and negatively regulates telomere length. Involved in the regulation of the mitotic spindle. Component of the shelterin complex (telosome) that is involved in the regulation of telomere length and protection. Shelterin associates with arrays of double-stranded 5'-TTAGGG-3' repeats added by telomerase and protects chromosome ends; without its protective activity, telomeres are no longer hidden from the DNA damage surveillance and chromosome ends are inappropriately processed by DNA repair pathways. This Cricetulus griseus (Chinese hamster) protein is Telomeric repeat-binding factor 1 (TERF1).